Reading from the N-terminus, the 364-residue chain is Probable mannose-1-phosphate guanylyltransferase 2 (364 aa).

Positions 6 and 7 each coordinate GDP-alpha-D-mannose. Residues G9, G11, T12, R13, and K23 each contribute to the diphosphate site. 5 residues coordinate GDP-alpha-D-mannose: G88, N112, D114, G149, and N176.

The protein belongs to the transferase hexapeptide repeat family.

The enzyme catalyses alpha-D-mannose 1-phosphate + GTP + H(+) = GDP-alpha-D-mannose + diphosphate. It participates in nucleotide-sugar biosynthesis; GDP-alpha-D-mannose biosynthesis; GDP-alpha-D-mannose from alpha-D-mannose 1-phosphate (GTP route): step 1/1. Catalyzes a reaction of the Smirnoff-Wheeler pathway, the major route to ascorbate biosynthesis in plants. The chain is Probable mannose-1-phosphate guanylyltransferase 2 from Arabidopsis thaliana (Mouse-ear cress).